Here is a 351-residue protein sequence, read N- to C-terminus: uncharacterized protein (351 aa).

Residues 1–61 form a disordered region; the sequence is MNDKRKPSFQ…RDKQEVKETR (61 aa). Basic and acidic residues-rich tracts occupy residues 16-38 and 44-61; these read FQERSVGEKYREKPTQNRPHFND and RNEKSRFPRDKQEVKETR.

The protein belongs to the class IV-like SAM-binding methyltransferase superfamily. RNA methyltransferase TrmH family.

This is an uncharacterized protein from Haemophilus influenzae (strain ATCC 51907 / DSM 11121 / KW20 / Rd).